The following is a 461-amino-acid chain: UDP-N-acetylmuramate--L-alanine ligase (461 aa).

ATP is bound at residue 112-118 (GTHGKTT).

The protein belongs to the MurCDEF family.

Its subcellular location is the cytoplasm. The catalysed reaction is UDP-N-acetyl-alpha-D-muramate + L-alanine + ATP = UDP-N-acetyl-alpha-D-muramoyl-L-alanine + ADP + phosphate + H(+). Its pathway is cell wall biogenesis; peptidoglycan biosynthesis. Cell wall formation. In Hydrogenovibrio crunogenus (strain DSM 25203 / XCL-2) (Thiomicrospira crunogena), this protein is UDP-N-acetylmuramate--L-alanine ligase.